The chain runs to 294 residues: 2-methoxy-6-polyprenyl-1,4-benzoquinol methylase, mitochondrial (294 aa).

The transit peptide at 1–10 (MALRSAAGRL) directs the protein to the mitochondrion. S-adenosyl-L-methionine contacts are provided by residues Thr-100, Asp-136, and 166–167 (DA).

The protein belongs to the class I-like SAM-binding methyltransferase superfamily. MenG/UbiE family. As to quaternary structure, component of a multi-subunit COQ enzyme complex.

It is found in the mitochondrion inner membrane. The catalysed reaction is a 2-methoxy-6-(all-trans-polyprenyl)benzene-1,4-diol + S-adenosyl-L-methionine = a 5-methoxy-2-methyl-3-(all-trans-polyprenyl)benzene-1,4-diol + S-adenosyl-L-homocysteine + H(+). Its pathway is cofactor biosynthesis; ubiquinone biosynthesis. Methyltransferase required for the conversion of 2-polyprenyl-6-methoxy-1,4-benzoquinol (DDMQH2) to 2-polyprenyl-3-methyl-6-methoxy-1,4-benzoquinol (DMQH2). This is 2-methoxy-6-polyprenyl-1,4-benzoquinol methylase, mitochondrial from Oryza sativa subsp. japonica (Rice).